The sequence spans 888 residues: Pumilio homology domain family member 4 (888 aa).

Thr-205, Thr-212, and Thr-252 each carry phosphothreonine. 2 disordered regions span residues 236–270 and 467–551; these read KAKKPSVGANNTAKTRTQSISFDNTPSSTSFIPPT and MNSA…RKIE. Residues 243–270 show a composition bias toward polar residues; it reads GANNTAKTRTQSISFDNTPSSTSFIPPT. Ser-256 is modified (phosphoserine). Low complexity-rich tracts occupy residues 478–499 and 521–543; these read NNNSMSSHNDNDNIGNSNYNNK and NNNNNNNNNNNNNNNSNATNSNS. The PUM-HD domain maps to 539-888; sequence TNSNSAEKQR…RIIGMLHLDS (350 aa). Pumilio repeat units follow at residues 563–598, 599–634, 635–671, 672–707, 708–743, 744–783, 784–821, and 823–861; these read QYIGSIHSLCKDQHGCRFLQKQLDILGSKAADAIFE, ETKDYTVELMTDSFGNYLIQKLLEEVTTEQRIVLTK, ISSPHFVEISLNPHGTRALQKLIECIKTDEEAQIVVD, SLRPYTVQLSKDLNGNHVIQKCLQRLKPENFQFIFD, AISDSCIDIATHRHGCCVLQRCLDHGTTEQCDNLCD, KLLALVDKLTLDPFGNYVVQYIITKEAEKNKYDYTHKIVH, LLKPRAIELSIHKFGSNVIEKILKTAIVSEPMILEILN, and GGETGIQSLLNDSYGNYVLQTALDISHKQNDYLYKRLSE.

Functionally, is not essential for haploid growth, but may affect diploid formation. The sequence is that of Pumilio homology domain family member 4 (PUF4) from Saccharomyces cerevisiae (strain ATCC 204508 / S288c) (Baker's yeast).